The chain runs to 189 residues: Auxin-induced protein IAA4 (189 aa).

An EAR-like (transcriptional repression) motif is present at residues 8–12 (LRLGL). The PB1 domain maps to 92 to 179 (GIFVKVSMDG…SCKRLRIMKG (88 aa)).

This sequence belongs to the Aux/IAA family. In terms of assembly, homodimers and heterodimers. Post-translationally, phosphorylated by phytochrome A in vitro.

It localises to the nucleus. Its function is as follows. Aux/IAA proteins are short-lived transcriptional factors that function as repressors of early auxin response genes at low auxin concentrations. Repression is thought to result from the interaction with auxin response factors (ARFs), proteins that bind to the auxin-responsive promoter element (AuxRE). Formation of heterodimers with ARF proteins may alter their ability to modulate early auxin response genes expression. This is Auxin-induced protein IAA4 (IAA4/5) from Pisum sativum (Garden pea).